Reading from the N-terminus, the 86-residue chain is DNA-directed RNA polymerase subunit omega (86 aa).

Positions 67–76 (SAREHAKESQ) are enriched in basic and acidic residues. The interval 67-86 (SAREHAKESQVSEEEVREES) is disordered. The segment covering 77 to 86 (VSEEEVREES) has biased composition (acidic residues).

This sequence belongs to the RNA polymerase subunit omega family. As to quaternary structure, the RNAP catalytic core consists of 2 alpha, 1 beta, 1 beta' and 1 omega subunit. When a sigma factor is associated with the core the holoenzyme is formed, which can initiate transcription.

It catalyses the reaction RNA(n) + a ribonucleoside 5'-triphosphate = RNA(n+1) + diphosphate. Promotes RNA polymerase assembly. Latches the N- and C-terminal regions of the beta' subunit thereby facilitating its interaction with the beta and alpha subunits. This Nitrosococcus oceani (strain ATCC 19707 / BCRC 17464 / JCM 30415 / NCIMB 11848 / C-107) protein is DNA-directed RNA polymerase subunit omega.